The sequence spans 155 residues: Small ribosomal subunit protein uS7 (155 aa).

Belongs to the universal ribosomal protein uS7 family. In terms of assembly, part of the 30S ribosomal subunit. Contacts proteins S9 and S11.

One of the primary rRNA binding proteins, it binds directly to 16S rRNA where it nucleates assembly of the head domain of the 30S subunit. Is located at the subunit interface close to the decoding center, probably blocks exit of the E-site tRNA. In Mycoplasma pneumoniae (strain ATCC 29342 / M129 / Subtype 1) (Mycoplasmoides pneumoniae), this protein is Small ribosomal subunit protein uS7.